Here is a 403-residue protein sequence, read N- to C-terminus: Creatinase (403 aa).

His232 is an active-site residue.

The protein belongs to the peptidase M24 family. Creatinase subfamily. In terms of assembly, homodimer.

It catalyses the reaction creatine + H2O = sarcosine + urea. The chain is Creatinase from Pseudomonas putida (Arthrobacter siderocapsulatus).